The chain runs to 532 residues: CTP synthase (532 aa).

Positions 1–267 (MTKYIFVTGG…DDIVLEHLQL (267 aa)) are amidoligase domain. CTP is bound at residue Ser-13. Position 13 (Ser-13) interacts with UTP. 14 to 19 (SIGKGI) is a binding site for ATP. L-glutamine is bound at residue Tyr-54. Asp-71 lines the ATP pocket. Positions 71 and 141 each coordinate Mg(2+). CTP-binding positions include 148–150 (DIE), 188–193 (KTKPTQ), and Lys-224. UTP is bound by residues 188–193 (KTKPTQ) and Lys-224. In terms of domain architecture, Glutamine amidotransferase type-1 spans 292–532 (RIGLVGKYVS…DFVGAALNNK (241 aa)). Residue Gly-354 participates in L-glutamine binding. The active-site Nucleophile; for glutamine hydrolysis is Cys-381. L-glutamine contacts are provided by residues 382–385 (LGMQ), Glu-405, and Arg-462. Catalysis depends on residues His-507 and Glu-509.

It belongs to the CTP synthase family. In terms of assembly, homotetramer.

It catalyses the reaction UTP + L-glutamine + ATP + H2O = CTP + L-glutamate + ADP + phosphate + 2 H(+). It carries out the reaction L-glutamine + H2O = L-glutamate + NH4(+). The enzyme catalyses UTP + NH4(+) + ATP = CTP + ADP + phosphate + 2 H(+). It functions in the pathway pyrimidine metabolism; CTP biosynthesis via de novo pathway; CTP from UDP: step 2/2. Allosterically activated by GTP, when glutamine is the substrate; GTP has no effect on the reaction when ammonia is the substrate. The allosteric effector GTP functions by stabilizing the protein conformation that binds the tetrahedral intermediate(s) formed during glutamine hydrolysis. Inhibited by the product CTP, via allosteric rather than competitive inhibition. Functionally, catalyzes the ATP-dependent amination of UTP to CTP with either L-glutamine or ammonia as the source of nitrogen. Regulates intracellular CTP levels through interactions with the four ribonucleotide triphosphates. This Listeria innocua serovar 6a (strain ATCC BAA-680 / CLIP 11262) protein is CTP synthase.